Here is a 649-residue protein sequence, read N- to C-terminus: Probable cyclic nucleotide-gated ion channel 12 (649 aa).

The Cytoplasmic segment spans residues 1-43 (MNHRRSKFARIDSMGVDGKLKSVRGRLKKVYGKMKTLENWRKT). A helical membrane pass occupies residues 44–64 (VLLACVVALAIDPLFLFIPLI). Topologically, residues 65–76 (DSQRFCFTFDKT) are extracellular. The helical transmembrane segment at 77 to 97 (LVAVVCVIRTFIDTFYVIHII) threads the bilayer. The Cytoplasmic segment spans residues 98–128 (YYLITETIAPRSQASLRGEIVVHSKATLKTR). Residues 129–149 (LLFHFIVDIISVLPIPQVVVL) form a helical membrane-spanning segment. Topologically, residues 150 to 162 (TLIPLSASLVSER) are extracellular. Residues 163-183 (ILKWIILSQYVPRIIRMYPLY) form a helical membrane-spanning segment. Topologically, residues 184 to 200 (KEVTRAFGTVAESKWAG) are cytoplasmic. Residues 201 to 221 (AALNLFLYMLHSYVFGAFWYL) traverse the membrane as a helical segment. The Extracellular portion of the chain corresponds to 222 to 329 (SSIERKSKCW…QNLETSNSAG (108 aa)). The chain crosses the membrane as a helical span at residues 330–350 (EIFFAIIICVSGLLLFAVLIG). Residues 351 to 649 (NVQKYLQSST…ADLEFAKAEA (299 aa)) are Cytoplasmic-facing. A nucleoside 3',5'-cyclic phosphate-binding positions include 436-559 (LNIM…TFRL) and E507. A calmodulin-binding region spans residues 545–560 (LNVFQRQKLQRTFRLY). Residues 565 to 594 (RSWAAFFIQAAWRKHCKRKLSKTRDNENIP) form the IQ domain. The tract at residues 618–649 (RRKDTADCSSSPDMSPPVPHKPADLEFAKAEA) is disordered. A compositionally biased stretch (basic and acidic residues) spans 638–649 (KPADLEFAKAEA).

Belongs to the cyclic nucleotide-gated cation channel (TC 1.A.1.5) family. Homotetramer or heterotetramer.

Its subcellular location is the cell membrane. Its function is as follows. Probable cyclic nucleotide-gated ion channel. This is Probable cyclic nucleotide-gated ion channel 12 (CNGC12) from Arabidopsis thaliana (Mouse-ear cress).